Here is a 201-residue protein sequence, read N- to C-terminus: Lipopolysaccharide core heptose(II)-phosphate phosphatase (201 aa).

The first 35 residues, 1–35 (MLAFILRFIKNKSYFALLAGAWVIIAGLTSQHAWS), serve as a signal peptide directing secretion.

It belongs to the phosphoglycerate mutase family. Ais subfamily.

The protein resides in the periplasm. It functions in the pathway bacterial outer membrane biogenesis; lipopolysaccharide metabolism. In terms of biological role, catalyzes the dephosphorylation of heptose(II) of the outer membrane lipopolysaccharide core. The chain is Lipopolysaccharide core heptose(II)-phosphate phosphatase from Salmonella arizonae (strain ATCC BAA-731 / CDC346-86 / RSK2980).